Here is an 85-residue protein sequence, read N- to C-terminus: Large ribosomal subunit protein bL27 (85 aa).

The protein belongs to the bacterial ribosomal protein bL27 family.

This chain is Large ribosomal subunit protein bL27, found in Pseudomonas fluorescens (strain SBW25).